Here is a 126-residue protein sequence, read N- to C-terminus: Small ribosomal subunit protein uS11 (126 aa).

Belongs to the universal ribosomal protein uS11 family. As to quaternary structure, part of the 30S ribosomal subunit.

In terms of biological role, located on the platform of the 30S subunit. This is Small ribosomal subunit protein uS11 from Methanosarcina acetivorans (strain ATCC 35395 / DSM 2834 / JCM 12185 / C2A).